The following is a 348-amino-acid chain: Dihydroorotase (348 aa).

Residues His-17 and His-19 each contribute to the Zn(2+) site. Residues His-19 to Arg-21 and Asn-45 contribute to the substrate site. Zn(2+) contacts are provided by Lys-103, His-140, and His-178. Residue Lys-103 is modified to N6-carboxylysine. Residue His-140 participates in substrate binding. Position 223 (Leu-223) interacts with substrate. A Zn(2+)-binding site is contributed by Asp-251. Asp-251 is an active-site residue. Residues His-255 and Ala-267 each contribute to the substrate site.

The protein belongs to the metallo-dependent hydrolases superfamily. DHOase family. Class II DHOase subfamily. As to quaternary structure, homodimer. It depends on Zn(2+) as a cofactor.

The enzyme catalyses (S)-dihydroorotate + H2O = N-carbamoyl-L-aspartate + H(+). The protein operates within pyrimidine metabolism; UMP biosynthesis via de novo pathway; (S)-dihydroorotate from bicarbonate: step 3/3. In terms of biological role, catalyzes the reversible cyclization of carbamoyl aspartate to dihydroorotate. The sequence is that of Dihydroorotase from Salmonella paratyphi B (strain ATCC BAA-1250 / SPB7).